Reading from the N-terminus, the 429-residue chain is 4-hydroxyphenylacetate degradation bifunctional isomerase/decarboxylase (429 aa).

Approximate repeat units lie at residues 1–215 and 216–429; these read MKGT…RKSF and PTLP…ETAK. Residues Glu-276, Glu-278, and Asp-307 each coordinate a divalent metal cation.

Belongs to the FAH family. Monomer. Mg(2+) is required as a cofactor.

It catalyses the reaction (2E,4Z)-5-hydroxypenta-2,4-diene-1,2,5-tricarboxylate = (3E,5R)-5-carboxy-2-oxohept-3-enedioate. The catalysed reaction is (3E,5R)-5-carboxy-2-oxohept-3-enedioate + H(+) = (4Z)-2-oxohept-4-enedioate + CO2. It participates in aromatic compound metabolism; 4-hydroxyphenylacetate degradation; pyruvate and succinate semialdehyde from 4-hydroxyphenylacetate: step 4/7. Its pathway is aromatic compound metabolism; 4-hydroxyphenylacetate degradation; pyruvate and succinate semialdehyde from 4-hydroxyphenylacetate: step 5/7. In terms of biological role, decarboxylates OPET (5-oxo-pent-3-ene-1,2,5-tricarboxylic acid) into HHDD (2-hydroxy-hept-2,4-diene-1,7-dioate) and isomerizes it to OHED (2-oxo-hept-3-ene-1,7-dioate). The sequence is that of 4-hydroxyphenylacetate degradation bifunctional isomerase/decarboxylase (hpaG) from Escherichia coli.